We begin with the raw amino-acid sequence, 358 residues long: Gentisate 1,2-dioxygenase (358 aa).

Residues 239-358 (QTLRQRAEND…AFNFYAEAEP (120 aa)) enclose the Cupin type-1 domain.

This sequence belongs to the gentisate 1,2-dioxygenase family. As to quaternary structure, homotetramer.

It carries out the reaction 2,5-dihydroxybenzoate + O2 = 3-maleylpyruvate + H(+). It functions in the pathway aromatic compound metabolism; naphthalene degradation. Its activity is regulated as follows. Inhibited by 2,2'-dipyridyl. In terms of biological role, catalyzes the oxygen-dependent ring fission of gentisate between the carboxyl and proximal hydroxyl groups at positions 1 and 2 of the aromatic ring to form maleylpyruvate. No activity with cathechol and protecatechuate as substrates. Part of a 3-hydroxybenzoic acid-degradation pathway. In Haloferax sp, this protein is Gentisate 1,2-dioxygenase (gdoA).